The chain runs to 111 residues: MIVEPMTKPRKPTVQRCQSFFTNGANHFYCKKSTHDGGRTHNLLIRSQTRCHYATRATVCWKFSIINKYIPTLANITITTLRKLYKRFIDRESLFLIFFRKDEHIVQNIIN.

This is an uncharacterized protein from Saccharomyces cerevisiae (strain ATCC 204508 / S288c) (Baker's yeast).